A 176-amino-acid chain; its full sequence is Flavodoxin 1 (176 aa).

The Flavodoxin-like domain maps to 4-165; it reads TGIFFGSDTG…RVEKWVKQIS (162 aa).

The protein belongs to the flavodoxin family. The cofactor is FMN.

In terms of biological role, low-potential electron donor to a number of redox enzymes (Potential). Involved in the reactivation of inactive cob(II)alamin in methionine synthase. In Escherichia coli O157:H7, this protein is Flavodoxin 1 (fldA).